The primary structure comprises 139 residues: Nucleoside diphosphate kinase (139 aa).

6 residues coordinate ATP: Lys-9, Phe-57, Arg-85, Thr-91, Arg-102, and Asn-112. The active-site Pros-phosphohistidine intermediate is the His-115.

The protein belongs to the NDK family. Homotetramer. Mg(2+) serves as cofactor.

The protein resides in the cytoplasm. The catalysed reaction is a 2'-deoxyribonucleoside 5'-diphosphate + ATP = a 2'-deoxyribonucleoside 5'-triphosphate + ADP. It carries out the reaction a ribonucleoside 5'-diphosphate + ATP = a ribonucleoside 5'-triphosphate + ADP. In terms of biological role, major role in the synthesis of nucleoside triphosphates other than ATP. The ATP gamma phosphate is transferred to the NDP beta phosphate via a ping-pong mechanism, using a phosphorylated active-site intermediate. The polypeptide is Nucleoside diphosphate kinase (Desulfosudis oleivorans (strain DSM 6200 / JCM 39069 / Hxd3) (Desulfococcus oleovorans)).